A 219-amino-acid chain; its full sequence is MASVTDGKTGVKDASDQNFDYMFKLLIIGNSSVGKTSFLFRYADDTFTPAFVSTVGIDFKVKTVYRHEKRVKLQIWDTAGQERYRTITTAYYRGAMGFILMYDITNEESFNAVQDWATQIKTYSWDNAQVILVGNKCDMEEERVVPTEKGRLLAEQLGFDFFEASAKENISVRQAFERLVDAICDKMSDSLDTDPSVLGASKTTRLSDTPPLLQQNCSC.

Alanine 2 is modified (N-acetylalanine). GTP contacts are provided by serine 31, serine 32, valine 33, glycine 34, lysine 35, threonine 36, serine 37, proline 49, and serine 53. Mg(2+) is bound at residue threonine 36. The Switch 1 motif lies at 45–58 (DTFTPAFVSTVGID). Mg(2+)-binding residues include threonine 54 and aspartate 77. The Switch 2 motif lies at 78–96 (TAGQERYRTITTAYYRGAM). Residue glycine 80 coordinates GTP. Residue threonine 86 is modified to Phosphothreonine. Residues asparagine 135, lysine 136, aspartate 138, alanine 166, and lysine 167 each coordinate GTP. Phosphoserine is present on residues serine 188 and serine 190. 2 S-geranylgeranyl cysteine lipidation sites follow: cysteine 217 and cysteine 219. A Cysteine methyl ester modification is found at cysteine 219.

The protein belongs to the small GTPase superfamily. Rab family. Interacts with RIMS1, RIMS2, RPH3A and RPH3AL. The GTP-bound form interacts with GAS8/DRC4 (via coiled-coil domains). Interacts with GDI2, CHM and CHML; phosphorylation at Thr-86 disrupts these interactions. Interacts with MADD (via uDENN domain); the GTP-bound form is preferred for interaction. The cofactor is Mg(2+). In terms of processing, phosphorylation of Thr-86 in the switch II region by LRRK2 prevents the association of RAB regulatory proteins, including CHM, CHML and RAB GDP dissociation inhibitor GDI2.

The protein resides in the cell membrane. It is found in the golgi apparatus. It carries out the reaction GTP + H2O = GDP + phosphate + H(+). With respect to regulation, regulated by guanine nucleotide exchange factors (GEFs) which promote the exchange of bound GDP for free GTP. Regulated by GTPase activating proteins (GAPs) which increase the GTP hydrolysis activity. Inhibited by GDP dissociation inhibitors (GDIs) which prevent Rab-GDP dissociation. Its function is as follows. The small GTPases Rab are key regulators of intracellular membrane trafficking, from the formation of transport vesicles to their fusion with membranes. Rabs cycle between an inactive GDP-bound form and an active GTP-bound form that is able to recruit to membranes different sets of downstream effectors directly responsible for vesicle formation, movement, tethering and fusion. The protein is Ras-related protein Rab-3B (RAB3B) of Mesocricetus auratus (Golden hamster).